The primary structure comprises 233 residues: Putative N-acetylmannosamine-6-phosphate 2-epimerase (233 aa).

It belongs to the NanE family.

It catalyses the reaction an N-acyl-D-glucosamine 6-phosphate = an N-acyl-D-mannosamine 6-phosphate. Its pathway is amino-sugar metabolism; N-acetylneuraminate degradation; D-fructose 6-phosphate from N-acetylneuraminate: step 3/5. Converts N-acetylmannosamine-6-phosphate (ManNAc-6-P) to N-acetylglucosamine-6-phosphate (GlcNAc-6-P). This is Putative N-acetylmannosamine-6-phosphate 2-epimerase from Yersinia pseudotuberculosis serotype O:3 (strain YPIII).